The chain runs to 78 residues: Large ribosomal subunit protein bL28 (78 aa).

The disordered stretch occupies residues 1–23; that stretch reads MSRVCQVTGKRPITGNNVSHSKR.

It belongs to the bacterial ribosomal protein bL28 family.

This chain is Large ribosomal subunit protein bL28, found in Marinomonas sp. (strain MWYL1).